Reading from the N-terminus, the 354-residue chain is Ribosomal RNA large subunit methyltransferase M (354 aa).

Residues Ser183, 216–219 (SPGG), Asp235, Asp255, and Asp271 contribute to the S-adenosyl-L-methionine site. Lys300 acts as the Proton acceptor in catalysis.

The protein belongs to the class I-like SAM-binding methyltransferase superfamily. RNA methyltransferase RlmE family. RlmM subfamily. Monomer.

It localises to the cytoplasm. The enzyme catalyses cytidine(2498) in 23S rRNA + S-adenosyl-L-methionine = 2'-O-methylcytidine(2498) in 23S rRNA + S-adenosyl-L-homocysteine + H(+). In terms of biological role, catalyzes the 2'-O-methylation at nucleotide C2498 in 23S rRNA. The protein is Ribosomal RNA large subunit methyltransferase M of Pseudomonas entomophila (strain L48).